Here is a 400-residue protein sequence, read N- to C-terminus: tRNA (guanine-N(7)-)-methyltransferase (400 aa).

Glu-124, Glu-149, and Asp-176 together coordinate S-adenosyl-L-methionine. Asp-232 provides a ligand contact to substrate.

The protein belongs to the class I-like SAM-binding methyltransferase superfamily. TrmB family.

It catalyses the reaction guanosine(46) in tRNA + S-adenosyl-L-methionine = N(7)-methylguanosine(46) in tRNA + S-adenosyl-L-homocysteine. The protein operates within tRNA modification; N(7)-methylguanine-tRNA biosynthesis. Catalyzes the formation of N(7)-methylguanine at position 46 (m7G46) in tRNA. This is tRNA (guanine-N(7)-)-methyltransferase from Helicobacter pylori (strain J99 / ATCC 700824) (Campylobacter pylori J99).